The sequence spans 401 residues: Flagellin D (401 aa).

The protein belongs to the bacterial flagellin family.

It is found in the secreted. The protein localises to the bacterial flagellum. In terms of biological role, flagellin is the subunit protein which polymerizes to form the filaments of bacterial flagella. The polypeptide is Flagellin D (flaD) (Rhizobium meliloti (strain 1021) (Ensifer meliloti)).